The chain runs to 357 residues: Transcription factor unc-86 (357 aa).

Residues 35–44 (RAAQVALADI) carry the POU-IV box motif. One can recognise a POU-specific domain in the interval 155–232 (DMDTDPRQLE…ILHSWLEKAE (78 aa)). The homeobox DNA-binding region spans 253 to 312 (KKRKRTSIAAPEKRELEQFFKQQPRPSGERIASIADRLDLKKNVVRVWFCNQRQKQKRDF).

This sequence belongs to the POU transcription factor family. Class-4 subfamily. Interacts with mec-3; the heterooligomer binds to the promoters of mec-3, mec-4 and mec-7. Specific to neurons and neuroblasts. Expressed in CEM head neurons and in IL2, URA, URB, URX and URY neurons. Not expressed in olfactory sensory neurons but expressed in AIZ interneurons.

The protein localises to the nucleus. Transcription factor required for correct cell fate determination and differentiation in diverse neuronal cell lineages where it plays a role in specifying the fate of daughter cells during cell divisions. Involved in sensory neuron production and function. Binds both alone and with mec-3 to the mec-3 promoter to initiate and maintain mec-3 expression which is required for sensory neuron differentiation. In addition, binds both alone and with mec-3 to the promoters of mec-4 and mec-7 which act to regulate sensory neuron function. Involved in determining the identity of the serotonergic NSM neurons and the cholinergic IL2 sensory and URA motor neurons. Promotes expression of the cfi-1 transcription factor in the URA and IL2 neurons which in turn activates normal URA and IL2 gene expression. Required to determine the identity of BDU sensory neurons in concert with transcription factor unc-86, regulating expression of a number of genes, including transcription factors ceh-14 and ahr-1, neuropeptides flp-10, nlp-1 and nlp-15, and tyramine receptor-encoding ser-2. Regulates expression of a number of genes in NSM neurons including bas-1, cat-1, dop-3, mgl-3, nlp-13, scd-2 and ptps-1. In the IL2 neurons, required for expression of cho-1, gcy-19, klp-6, lag-2, unc-5 and unc-17. Promotes expression of pkd-2 in the male-specific CEM head neurons. Required for dauer-specific branching of IL2Q neurons and nictation behavior. Controls both the timing and direction of axon outgrowth in HSN neurons. Plays a role in serotonin production by regulating expression of the tryptophan hydrolase tph-1 which catalyzes serotonin synthesis, in the AIM, NSM, HSN and RIH neurons. Involved in regulation of lin-11 expression in the AIZ interneurons, the major interneurons of the olfactory pathway, and is required for odortaxis behavior. Involved in neurite pruning between AIM neurons during larval development by regulating the expression of transcription factor mbr-1. Required for correct localization of unc-40. This is Transcription factor unc-86 (unc-86) from Caenorhabditis elegans.